We begin with the raw amino-acid sequence, 623 residues long: Transketolase (623 aa).

Met1 carries the post-translational modification N-acetylmethionine. Ser3 is subject to Phosphoserine. Residues Lys6 and Lys11 each carry the N6-acetyllysine modification. His37 is a substrate binding site. Residues Ser40 and His77 each contribute to the thiamine diphosphate site. Ser104 is modified (phosphoserine). Residue 123–125 (GSL) coordinates thiamine diphosphate. Position 144 is an N6-acetyllysine (Lys144). Position 155 (Asp155) interacts with Mg(2+). 2 residues coordinate thiamine diphosphate: Gly156 and Asn185. Residues Asn185 and Leu187 each contribute to the Mg(2+) site. Lys204, Lys232, and Lys241 each carry N6-acetyllysine. Residues Lys244 and His258 each contribute to the thiamine diphosphate site. A substrate-binding site is contributed by His258. Position 260 is an N6-acetyllysine (Lys260). Tyr275 bears the Phosphotyrosine mark. Thr287 carries the post-translational modification Phosphothreonine. Position 295 is a phosphoserine (Ser295). Residues Arg318 and Ser345 each contribute to the substrate site. Ser345 is modified (phosphoserine). A Glycyl lysine isopeptide (Lys-Gly) (interchain with G-Cter in SUMO2) cross-link involves residue Lys352. Glu366 acts as the Proton donor in catalysis. Phe392 lines the thiamine diphosphate pocket. Positions 416 and 424 each coordinate substrate. Gln428 lines the thiamine diphosphate pocket. Arg474 lines the substrate pocket. An N6-acetyllysine mark is found at Lys538 and Lys603.

Belongs to the transketolase family. In terms of assembly, homodimer. It depends on Mg(2+) as a cofactor. Ca(2+) serves as cofactor. Mn(2+) is required as a cofactor. The cofactor is Co(2+). Requires thiamine diphosphate as cofactor.

The catalysed reaction is D-sedoheptulose 7-phosphate + D-glyceraldehyde 3-phosphate = aldehydo-D-ribose 5-phosphate + D-xylulose 5-phosphate. Catalyzes the transfer of a two-carbon ketol group from a ketose donor to an aldose acceptor, via a covalent intermediate with the cofactor thiamine pyrophosphate. The sequence is that of Transketolase (TKT) from Homo sapiens (Human).